Reading from the N-terminus, the 321-residue chain is MAVYTDINEVDLKDFLAHYDTGELLSFKGIAEGVENSNFLLHTTKGALILTLYEKRVEKDDLPFFLGLMHHLSAKGLNCPLPLPRKDGALLGELSGRPAALISFLEGMWLRKPETQHCRAVGEALATMHLAAEGFALRRDNALDLAGWQALWPKARARADEVSPGLKAEIDAELVHLAGQWPKDLPAGVIHADLFPDNVFFLGDQLSGLIDFYFACNDFLAYDLSICLNAWCFEKDGSYNITKGKAMIDGYLAVRSLSPAEVAAMPVLCRGSALRFLLTRLYDWLTTPEGAMVVKKEPLEYLRKLRFHQAVETAAEYGWPQ.

The protein belongs to the pseudomonas-type ThrB family.

It catalyses the reaction L-homoserine + ATP = O-phospho-L-homoserine + ADP + H(+). It participates in amino-acid biosynthesis; L-threonine biosynthesis; L-threonine from L-aspartate: step 4/5. The protein is Homoserine kinase of Allorhizobium ampelinum (strain ATCC BAA-846 / DSM 112012 / S4) (Agrobacterium vitis (strain S4)).